The sequence spans 223 residues: Putative germin-like protein 2-3 (223 aa).

Positions 1–28 are cleaved as a signal peptide; that stretch reads MAAIRASFLLAAAALLALWCSDHGGVVA. C38 and C53 are joined by a disulfide. A Cupin type-1 domain is found at 67–217; sequence SGLHMAGNTT…AFQVEKTVVD (151 aa). The N-linked (GlcNAc...) asparagine glycan is linked to N74. 4 residues coordinate Mn(2+): H115, H117, E122, and H163.

The protein belongs to the germin family. As to quaternary structure, oligomer (believed to be a pentamer but probably hexamer).

It localises to the secreted. The protein resides in the extracellular space. Its subcellular location is the apoplast. Its function is as follows. May play a role in plant defense. Probably has no oxalate oxidase activity even if the active site is conserved. The polypeptide is Putative germin-like protein 2-3 (Oryza sativa subsp. japonica (Rice)).